A 986-amino-acid chain; its full sequence is E3 ubiquitin-protein ligase Arkadia (986 aa).

Residues lysine 19, lysine 28, lysine 34, lysine 47, lysine 59, lysine 73, lysine 87, lysine 96, and lysine 110 each participate in a glycyl lysine isopeptide (Lys-Gly) (interchain with G-Cter in SUMO2) cross-link. Residues 66-89 (HLCDDSQKQEKDMNGNQQEQEKSL) show a composition bias toward basic and acidic residues. The segment at 66–106 (HLCDDSQKQEKDMNGNQQEQEKSLVVRKKRKSQQAGPSYVQ) is disordered. The interval 120–191 (QHLGTPSDED…HKWPRTETES (72 aa)) is disordered. Residues 132 to 151 (SSFSDCLSSPSSSLHFGDSD) show a composition bias toward low complexity. Positions 164–173 (RHSQTILNAK) are enriched in polar residues. Lysine 173 participates in a covalent cross-link: Glycyl lysine isopeptide (Lys-Gly) (interchain with G-Cter in SUMO2). A compositionally biased stretch (basic residues) spans 174–184 (SRSHSARSHKW). Glycyl lysine isopeptide (Lys-Gly) (interchain with G-Cter in SUMO2) cross-links involve residues lysine 198 and lysine 218. Positions 241-404 (VLARRKYALL…VPTTSARMES (164 aa)) are interaction with AXIN1. Residues 248–277 (ALLPSSSSSSENDLSSESSSSSSTEGEEDL) form a disordered region. Residues 252–271 (SSSSSSENDLSSESSSSSST) show a composition bias toward low complexity. The SUMO interaction motif 1 (SIM) motif lies at 300–304 (VVVIE). The SUMO interaction motif 2 (SIM) signature appears at 325–331 (EVEIVTV). A disordered region spans residues 337 to 373 (SRSTLGHSRSHWSQGSSSHASRPQEPRNRSRISTVIQ). Residues 347-357 (HWSQGSSSHAS) are compositionally biased toward low complexity. The SUMO interaction motif 3 (SIM) signature appears at 382-386 (VVDLT). Disordered regions lie at residues 389 to 471 (EDEP…ETGP), 506 to 561 (QQHG…SYHE), 610 to 646 (APSQ…RHYM), 659 to 684 (HQAS…VDYV), and 696 to 719 (ISSH…TAAP). Residues 395 to 466 (VPTTSARMES…DSRRTTSSAV (72 aa)) are compositionally biased toward polar residues. Basic residues predominate over residues 508–522 (HGHHFQHHHHHHHTP). Positions 551-561 (ANSSSGTSYHE) are enriched in polar residues. Residues 670-680 (NPPPQTQPPPQ) show a composition bias toward pro residues. Residues 907–909 (YPH) are ubiquitin binding. Residues lysine 915 and lysine 919 each participate in a glycyl lysine isopeptide (Lys-Gly) (interchain with G-Cter in SUMO2) cross-link. Zn(2+) is bound by residues cysteine 934 and cysteine 937. The RING-type; atypical zinc finger occupies 934-975 (CTICLSILEEGEDVRRLPCMHLFHQVCVDQWLITNKKCPICR). Residues 949–953 (RLPCM) form a ubiquitin binding region. Zn(2+)-binding residues include histidine 957 and cysteine 960.

It belongs to the Arkadia family. Monomer. Interacts with SMAD6, SMAD7, AXIN1, AXIN2 and SKIL isoform SNON. Interacts with (phosphorylated) SMAD2 and SMAD3. Part of a complex containing RNF111, AXIN1 and SMAD7. Interacts (via SIM domains) with SUMO1 and SUMO2.

It localises to the nucleus. Its subcellular location is the cytoplasm. The protein resides in the PML body. The catalysed reaction is S-ubiquitinyl-[E2 ubiquitin-conjugating enzyme]-L-cysteine + [acceptor protein]-L-lysine = [E2 ubiquitin-conjugating enzyme]-L-cysteine + N(6)-ubiquitinyl-[acceptor protein]-L-lysine.. It functions in the pathway protein modification; protein ubiquitination. With respect to regulation, binds free ubiquitin non-covalently via its RING-type zinc finger. Ubiquitin-binding leads to enhance the E3 ubiquitin-protein ligase activity by stabilizing the ubiquitin-conjugating enzyme E2 (donor ubiquitin) in the 'closed' conformation and activating ubiquitin transfer. In terms of biological role, E3 ubiquitin-protein ligase. Required for mesoderm patterning during embryonic development. Acts as an enhancer of the transcriptional responses of the SMAD2/SMAD3 effectors, which are activated downstream of BMP. Acts by mediating ubiquitination and degradation of SMAD inhibitors such as SMAD7, inducing their proteasomal degradation and thereby enhancing the transcriptional activity of TGF-beta and BMP. In addition to enhance transcription of SMAD2/SMAD3 effectors, also regulates their turnover by mediating their ubiquitination and subsequent degradation, coupling their activation with degradation, thereby ensuring that only effectors 'in use' are degraded. Activates SMAD3/SMAD4-dependent transcription by triggering signal-induced degradation of SNON isoform of SKIL. Associates with UBE2D2 as an E2 enzyme. Specifically binds polysumoylated chains via SUMO interaction motifs (SIMs) and mediates ubiquitination of sumoylated substrates. Catalyzes 'Lys-63'-linked ubiquitination of sumoylated XPC in response to UV irradiation, promoting nucleotide excision repair. Mediates ubiquitination and degradation of sumoylated PML. The regulation of the BMP-SMAD signaling is however independent of sumoylation and is not dependent of SUMO interaction motifs (SIMs). The polypeptide is E3 ubiquitin-protein ligase Arkadia (RNF111) (Pongo abelii (Sumatran orangutan)).